The chain runs to 271 residues: Shikimate dehydrogenase (NADP(+)) (271 aa).

Residues Ser-14–Ser-16 and Thr-61 contribute to the shikimate site. Lys-65 acts as the Proton acceptor in catalysis. Shikimate is bound by residues Asn-86 and Asp-101. NADP(+) contacts are provided by residues Gly-125–Ala-129 and Ile-212. Tyr-214 is a binding site for shikimate. Gly-235 provides a ligand contact to NADP(+).

This sequence belongs to the shikimate dehydrogenase family. Homodimer.

The enzyme catalyses shikimate + NADP(+) = 3-dehydroshikimate + NADPH + H(+). Its pathway is metabolic intermediate biosynthesis; chorismate biosynthesis; chorismate from D-erythrose 4-phosphate and phosphoenolpyruvate: step 4/7. Functionally, involved in the biosynthesis of the chorismate, which leads to the biosynthesis of aromatic amino acids. Catalyzes the reversible NADPH linked reduction of 3-dehydroshikimate (DHSA) to yield shikimate (SA). The chain is Shikimate dehydrogenase (NADP(+)) from Clostridium perfringens (strain ATCC 13124 / DSM 756 / JCM 1290 / NCIMB 6125 / NCTC 8237 / Type A).